The following is a 175-amino-acid chain: Phosphopantetheine adenylyltransferase (175 aa).

Ser-10 provides a ligand contact to substrate. Residues Ser-10–Phe-11 and His-18 each bind ATP. Positions 42, 74, and 88 each coordinate substrate. Residues Gly-89–Arg-91, Glu-99, and Trp-124–Ser-130 each bind ATP.

It belongs to the bacterial CoaD family. Homohexamer. Requires Mg(2+) as cofactor.

It is found in the cytoplasm. The catalysed reaction is (R)-4'-phosphopantetheine + ATP + H(+) = 3'-dephospho-CoA + diphosphate. The protein operates within cofactor biosynthesis; coenzyme A biosynthesis; CoA from (R)-pantothenate: step 4/5. Reversibly transfers an adenylyl group from ATP to 4'-phosphopantetheine, yielding dephospho-CoA (dPCoA) and pyrophosphate. The sequence is that of Phosphopantetheine adenylyltransferase from Desulfatibacillum aliphaticivorans.